Here is a 172-residue protein sequence, read N- to C-terminus: Large ribosomal subunit protein uL10 (172 aa).

Belongs to the universal ribosomal protein uL10 family. As to quaternary structure, part of the ribosomal stalk of the 50S ribosomal subunit. The N-terminus interacts with L11 and the large rRNA to form the base of the stalk. The C-terminus forms an elongated spine to which L12 dimers bind in a sequential fashion forming a multimeric L10(L12)X complex.

Its function is as follows. Forms part of the ribosomal stalk, playing a central role in the interaction of the ribosome with GTP-bound translation factors. This is Large ribosomal subunit protein uL10 from Mesorhizobium japonicum (strain LMG 29417 / CECT 9101 / MAFF 303099) (Mesorhizobium loti (strain MAFF 303099)).